Consider the following 242-residue polypeptide: ATP-dependent dethiobiotin synthetase BioD (242 aa).

12–17 (EVGKTV) provides a ligand contact to ATP. Thr-16 contacts Mg(2+). Residue Lys-37 is part of the active site. Position 41 (Ser-41) interacts with substrate. Residues Asp-51 and 112-115 (EGAG) contribute to the ATP site. Positions 51 and 112 each coordinate Mg(2+).

This sequence belongs to the dethiobiotin synthetase family. As to quaternary structure, homodimer. Requires Mg(2+) as cofactor.

It is found in the cytoplasm. The enzyme catalyses (7R,8S)-7,8-diammoniononanoate + CO2 + ATP = (4R,5S)-dethiobiotin + ADP + phosphate + 3 H(+). The protein operates within cofactor biosynthesis; biotin biosynthesis; biotin from 7,8-diaminononanoate: step 1/2. In terms of biological role, catalyzes a mechanistically unusual reaction, the ATP-dependent insertion of CO2 between the N7 and N8 nitrogen atoms of 7,8-diaminopelargonic acid (DAPA, also called 7,8-diammoniononanoate) to form a ureido ring. This is ATP-dependent dethiobiotin synthetase BioD from Bacillus cereus (strain AH820).